A 464-amino-acid polypeptide reads, in one-letter code: Cysteine--tRNA ligase (464 aa).

Cysteine 27 is a Zn(2+) binding site. The 'HIGH' region signature appears at 29–39 (PTVYNFFHIGN). Residues cysteine 207, histidine 232, and glutamate 236 each coordinate Zn(2+). The 'KMSKS' region signature appears at 264 to 268 (KMSKS). Lysine 267 provides a ligand contact to ATP.

Belongs to the class-I aminoacyl-tRNA synthetase family. In terms of assembly, monomer. Zn(2+) serves as cofactor.

The protein resides in the cytoplasm. It carries out the reaction tRNA(Cys) + L-cysteine + ATP = L-cysteinyl-tRNA(Cys) + AMP + diphosphate. This chain is Cysteine--tRNA ligase, found in Clostridium acetobutylicum (strain ATCC 824 / DSM 792 / JCM 1419 / IAM 19013 / LMG 5710 / NBRC 13948 / NRRL B-527 / VKM B-1787 / 2291 / W).